A 372-amino-acid polypeptide reads, in one-letter code: MKLLQTPLYQECKELGGKMVPFANWEMPVSFSGLIEEHNAVRKNVGMFDISHMGVVQLKGKNIKSALQNLVPSDVFRIGPSEACYTVFLKENGGIQDDLIIYDQGVLDTNEESVVLVINAARKESDVEWLSSNLSKKEITISEFMPEGALIAIQGPESISTLEKILEEPLSNLPRFGHRTITSNPNLINSQESIFIARTGYTGEEGFEFLSSPETAKSIWKSLIASGVTPCGLGARDTLRLEASMHLYGNDINLDTTPFEAGLGWLVHLEMPNDFIGRKALEKQAEVGTQKKLVGIQVLDKGIARKGYPVLYNSETVGIVTSGTWSPTLQKPIALAYVPSEIAKVNTQIEVEIRGKKHPAIIVKRPFYRKGF.

Belongs to the GcvT family. The glycine cleavage system is composed of four proteins: P, T, L and H.

It catalyses the reaction N(6)-[(R)-S(8)-aminomethyldihydrolipoyl]-L-lysyl-[protein] + (6S)-5,6,7,8-tetrahydrofolate = N(6)-[(R)-dihydrolipoyl]-L-lysyl-[protein] + (6R)-5,10-methylene-5,6,7,8-tetrahydrofolate + NH4(+). Functionally, the glycine cleavage system catalyzes the degradation of glycine. This chain is Aminomethyltransferase, found in Prochlorococcus marinus (strain NATL1A).